The primary structure comprises 1494 residues: B-cell CLL/lymphoma 9-like protein (1494 aa).

2 disordered regions span residues 1-236 (MRIL…PPSQ) and 269-496 (VPRA…DMGQ). Residues 20-37 (GSPPLSPRGHCPPAPAKP) are compositionally biased toward pro residues. Residues Ser21 and Ser25 each carry the phosphoserine modification. At Lys36 the chain carries N6-acetyllysine. 2 stretches are compositionally biased toward polar residues: residues 45-70 (TNHG…TCNL) and 85-96 (NQISPSNSSLKN). Ser88 is modified (phosphoserine). N6-acetyllysine occurs at positions 108 and 110. Composition is skewed to basic and acidic residues over residues 114–126 (ERSV…EQRE) and 134–153 (SEAK…ERKQ). Ser116 and Ser118 each carry phosphoserine. At Lys137 the chain carries N6-acetyllysine. The span at 193-207 (PGQTAQLPLSESSAP) shows a compositional bias: polar residues. Composition is skewed to pro residues over residues 279–289 (KVPPTPEPLPL) and 299–322 (SQPP…PPEG). The segment at 302 to 530 (PPLPPPPPAP…QEEYYEEKRR (229 aa)) is necessary for interaction with CTNNB1. The segment covering 348–360 (THPNTPTAATANN) has biased composition (low complexity). Residues 396 to 418 (LSKEQLEHRERSLQTLRDIERLL) show a composition bias toward basic and acidic residues. Ser421 is subject to Phosphoserine. A Phosphothreonine modification is found at Thr511. Asymmetric dimethylarginine is present on Arg677. Phosphoserine is present on residues Ser747, Ser810, Ser912, Ser923, Ser935, Ser939, Ser944, Ser972, Ser984, Ser988, Ser994, Ser1001, Ser1007, and Ser1014. 2 disordered regions span residues 905-1082 (RGLG…NPLS) and 1113-1206 (ELLP…PGGP). A compositionally biased stretch (polar residues) spans 932-957 (PTLSQVHSPLVTSPSANLKSPQTPSQ). Residues 974-993 (QVLSSSLGVRSPTGSPSRLK) are compositionally biased toward polar residues. Over residues 1016-1035 (GVSQNKQPPLSINSSSTLGN) the composition is skewed to polar residues. The segment covering 1046-1059 (PRNSSSAPPANPSS) has biased composition (low complexity). Positions 1060 to 1082 (GLMNPSLPFTSSPDPTPSQNPLS) are enriched in polar residues. The span at 1119–1129 (PLLPPPPPPQG) shows a compositional bias: pro residues. Over residues 1133-1143 (GISNNQPNQMH) the composition is skewed to polar residues. The span at 1165–1176 (HEPPPTMLPSPT) shows a compositional bias: pro residues. Lys1339 is covalently cross-linked (Glycyl lysine isopeptide (Lys-Gly) (interchain with G-Cter in SUMO2)).

Belongs to the BCL9 family. Found in a complex with CDC73; CTNNB1 and PYGO1. Interacts with CTNNB1. In terms of tissue distribution, expressed in kidney, liver, lung, testis, brain, spleen, heart and skeletal muscle. Highly expressed in numerous colorectal tumors compared to corresponding non-cancerous tissues.

The protein localises to the nucleus. In terms of biological role, transcriptional regulator that acts as an activator. Promotes beta-catenin transcriptional activity. Plays a role in tumorigenesis. Enhances the neoplastic transforming activity of CTNNB1. In Mus musculus (Mouse), this protein is B-cell CLL/lymphoma 9-like protein (Bcl9l).